The sequence spans 107 residues: MKDFYYETMYILRADLTEEQVEQAIAKYQTLLTEAGAEVQDTQHRGKRRLAYLINKQREGIYVQINYTGDGSQIAPLERALRLSEEVLRFLTVKQEVRPPAPVAVEA.

It belongs to the bacterial ribosomal protein bS6 family.

In terms of biological role, binds together with bS18 to 16S ribosomal RNA. This is Small ribosomal subunit protein bS6 from Synechococcus elongatus (strain ATCC 33912 / PCC 7942 / FACHB-805) (Anacystis nidulans R2).